Consider the following 299-residue polypeptide: MTRTDGDQWDIVSSVGFTALMVSSFRALETTRTEPLIRDEYARAFVEASGEPRLTEALAAGTPESEWDTATVYLVNHLAVRTKYFDEFFAAATGSGIQQVVILAAGLDSRVYRLPWPDGTVVYELDQPKVLEFKDHVLREEHAVPLAERREVAVDLRDDWIAALRTAGFDATKPTAWLAEGLLAYLPGAAQDALFENITAHSAPGSFLATEWRRRQATAGQWQDAVNKLKPEFIKDISIGSLIYDDERQDPIEWLREHGWQVDTANRLEQAAAYGRPAPSEHSDVTSLWSDAYFITATR.

Residues D126 and 155 to 156 (DL) each bind S-adenosyl-L-methionine.

The protein belongs to the UPF0677 family.

Functionally, exhibits S-adenosyl-L-methionine-dependent methyltransferase activity. The protein is Putative S-adenosyl-L-methionine-dependent methyltransferase MAB_0027c of Mycobacteroides abscessus (strain ATCC 19977 / DSM 44196 / CCUG 20993 / CIP 104536 / JCM 13569 / NCTC 13031 / TMC 1543 / L948) (Mycobacterium abscessus).